We begin with the raw amino-acid sequence, 248 residues long: Adenosylcobinamide-GDP ribazoletransferase (248 aa).

A run of 6 helical transmembrane segments spans residues 36–56, 59–79, 114–134, 137–157, 170–190, and 199–219; these read FFLPVVASIIGGMEFLIYLGL, FLPSNVIIVLLLLFTAMITGG, GTIALIIDLLLKYQLLYSLVL, YSIAIFLAPIIGRISILFLCL, IFIGNMSKPIVFFISTIVLVL, and ATIIPFIGALLITYLLYLLCL.

This sequence belongs to the CobS family. Requires Mg(2+) as cofactor.

Its subcellular location is the cell membrane. The catalysed reaction is alpha-ribazole + adenosylcob(III)inamide-GDP = adenosylcob(III)alamin + GMP + H(+). It catalyses the reaction alpha-ribazole 5'-phosphate + adenosylcob(III)inamide-GDP = adenosylcob(III)alamin 5'-phosphate + GMP + H(+). The protein operates within cofactor biosynthesis; adenosylcobalamin biosynthesis; adenosylcobalamin from cob(II)yrinate a,c-diamide: step 7/7. Its function is as follows. Joins adenosylcobinamide-GDP and alpha-ribazole to generate adenosylcobalamin (Ado-cobalamin). Also synthesizes adenosylcobalamin 5'-phosphate from adenosylcobinamide-GDP and alpha-ribazole 5'-phosphate. The protein is Adenosylcobinamide-GDP ribazoletransferase of Clostridium botulinum (strain Loch Maree / Type A3).